We begin with the raw amino-acid sequence, 462 residues long: Ubiquitin carboxyl-terminal hydrolase calypso (462 aa).

The region spanning 29-260 (GWLELESDPG…IRFNLMAVVP (232 aa)) is the UCH catalytic domain. C115 serves as the catalytic Nucleophile. H197 serves as the catalytic Proton donor. Residues 357–385 (NYDKFICTFLSMLAHQGVLGELVSQHLLP) enclose the ULD domain. The interval 387–462 (KKIANRLNRQ…KGRNKCRKRK (76 aa)) is positively charged C-terminal tail required for binding nucleosomes. Residues 413-447 (GTNAAGSKSQQQQQQTQQQPQQTQTAKNGKSPGKT) are compositionally biased toward low complexity. The tract at residues 413–462 (GTNAAGSKSQQQQQQTQQQPQQTQTAKNGKSPGKTPGRRRKGRNKCRKRK) is disordered. Residues 448–462 (PGRRRKGRNKCRKRK) are compositionally biased toward basic residues.

The protein belongs to the peptidase C12 family. BAP1 subfamily. As to quaternary structure, catalytic component of the polycomb repressive deubiquitinase (PR-DUB) complex, at least composed of caly/calypso, Asx and sba (MBD5/6 homolog). The PR-DUB complex associates with nucleosomes to mediate deubiquitination of histone H2AK118ub1 substrates; the association requires the positively charged C-terminal tail of caly, probably due to direct binding of DNA. Interacts (via ULD domain) with Asx (via DEUBAD domain); the interaction produces a stable heterodimer with a composite binding site for ubiquitin. Homodimerizes (via coiled-coil hinge-region between the UCH and ULD domains) to mediate assembly of 2 copies of the caly-Asx heterodimer into a bisymmetric tetramer; dimerization enhances PR-DUB association with nucleosomes.

It localises to the nucleus. It catalyses the reaction Thiol-dependent hydrolysis of ester, thioester, amide, peptide and isopeptide bonds formed by the C-terminal Gly of ubiquitin (a 76-residue protein attached to proteins as an intracellular targeting signal).. In terms of biological role, catalytic component of the polycomb repressive deubiquitinase (PR-DUB) complex, a complex that specifically mediates deubiquitination of histone H2A monoubiquitinated at 'Lys-119' (H2AK118ub1). Mediates bisymmetric organization of the PR-DUB complex and is involved in association with nucleosomes to mediate deubiquitination. Does not deubiquitinate monoubiquitinated histone H2B. Required to maintain the transcriptionally repressive state of homeotic genes throughout development. The PR-DUB complex has weak or no activity toward 'Lys-48'- and 'Lys-63'-linked polyubiquitin chains. Polycomb group (PcG) protein. This chain is Ubiquitin carboxyl-terminal hydrolase calypso, found in Drosophila grimshawi (Hawaiian fruit fly).